We begin with the raw amino-acid sequence, 555 residues long: Membrane protein insertase YidC (555 aa).

5 helical membrane passes run 7 to 24, 367 to 387, 437 to 457, 476 to 496, and 511 to 531; these read VLWV…DNWQ, WGWS…PLSA, LPVV…LASV, PFFI…SLNP, and PIAF…YYVV.

This sequence belongs to the OXA1/ALB3/YidC family. Type 1 subfamily. Interacts with the Sec translocase complex via SecD. Specifically interacts with transmembrane segments of nascent integral membrane proteins during membrane integration.

Its subcellular location is the cell inner membrane. Its function is as follows. Required for the insertion and/or proper folding and/or complex formation of integral membrane proteins into the membrane. Involved in integration of membrane proteins that insert both dependently and independently of the Sec translocase complex, as well as at least some lipoproteins. Aids folding of multispanning membrane proteins. In Burkholderia lata (strain ATCC 17760 / DSM 23089 / LMG 22485 / NCIMB 9086 / R18194 / 383), this protein is Membrane protein insertase YidC.